The primary structure comprises 341 residues: MTLKGKKVTVHDMTLRDGMHPKRHLMTLDQMTAIATGLDAAGVPLIEVTHGDGLGGSSVNYGFPAHTDEEYLGAVIPKMKNAKVSALLLPGIGTVDHLKMARDLGVHTIRVATHCTEADVSEQHITMARKLEMDTVGFLMMAHMNSAEGLVKQAKLMESYGANCIYVTDSAGHLLPEGVKERLSAVRAALKPETELGFHGHHNLAMGVANSIAAIEVGANRIDAAAAGLGAGAGNTPMEVLIAVCSLMGIETGVDVAKITDVAEDLVVPMMDFPIRIDRDALTLGYAGVYGSFLLFAKRASAKYGVPARDILVELGRRGMVGGQEDMIEDTAITMARERGV.

Residues 8-260 (VTVHDMTLRD…ETGVDVAKIT (253 aa)) form the Pyruvate carboxyltransferase domain. Residue 16–17 (RD) participates in substrate binding. Mn(2+) is bound at residue Asp-17. His-20 serves as the catalytic Proton acceptor. The substrate site is built by Ser-170 and His-199. The Mn(2+) site is built by His-199 and His-201. A substrate-binding site is contributed by Tyr-290.

The protein belongs to the 4-hydroxy-2-oxovalerate aldolase family.

The enzyme catalyses (S)-4-hydroxy-2-oxopentanoate = acetaldehyde + pyruvate. This chain is 4-hydroxy-2-oxovalerate aldolase 2, found in Dechloromonas aromatica (strain RCB).